The primary structure comprises 239 residues: DNA damage-regulated autophagy modulator protein 1 (239 aa).

6 helical membrane-spanning segments follow: residues 15–35 (ILVI…VLIG), 54–74 (SGVF…TMYT), 91–111 (IYFN…MGIV), 119–139 (VPAV…MYIL), 162–182 (MTVS…SILS), and 201–221 (TSAI…LTFI).

It belongs to the DRAM/TMEM150 family.

It localises to the lysosome membrane. Functionally, lysosomal modulator of autophagy that plays a central role in p53/TP53-mediated apoptosis. This is DNA damage-regulated autophagy modulator protein 1 (dram1) from Xenopus laevis (African clawed frog).